The following is an 82-amino-acid chain: Toxin GTx1-15 (82 aa).

The N-terminal stretch at 1–21 (MKTSVVFVIAGLALLSVACYA) is a signal peptide. Positions 22 to 46 (SELKEQSSINEVLSTIFHFEQPEER) are excised as a propeptide. Cystine bridges form between cysteine 48–cysteine 63, cysteine 55–cysteine 69, and cysteine 62–cysteine 76. The residue at position 80 (phenylalanine 80) is a Phenylalanine amide.

The protein belongs to the neurotoxin 10 (Hwtx-1) family. 08 (Gtx1-15) subfamily. In terms of tissue distribution, expressed by the venom gland.

It localises to the secreted. In terms of biological role, potent voltage-gated sodium channel blocker. Potently inhibits the voltage-gated sodium channels Nav1.7/SCN9A (IC(50)=0.58-10 nM). Shows a moderate activity on Nav1.1/SCN1A (IC(50)=6 nM), Nav1.2/SCN2A (IC(50)=5-128 nM), Nav1.3/SCN3A (IC(50)=20.3-170 nM), and Nav1.6/SCN8A (IC(50)=17-20.1 nM). Shows an unclear inhibition of Nav1.4/SCN4A (IC(50)=200 nM to &gt;10 uM), Nav1.5/SCN5A (IC(50)=140 nM to &gt;10 uM) and Nav1.8/SCN10A (IC(50)=68-12200 nM). Weakly blocks the low voltage-gated calcium channels Cav3.1/CACNA1G (30% inhibition of the peak current by 9.8 nM of the toxin). It shows moderate affinity for lipid bilayers. This chain is Toxin GTx1-15, found in Grammostola rosea (Chilean rose tarantula).